We begin with the raw amino-acid sequence, 149 residues long: Transcriptional repressor NrdR (149 aa).

The segment at 3 to 34 (CPFCSATDTKVIDSRLVADGHQVRRRRECAEC) is a zinc-finger region. Residues 49–139 (PRVVKQDGSR…VYRAFEDVSE (91 aa)) form the ATP-cone domain.

It belongs to the NrdR family. It depends on Zn(2+) as a cofactor.

In terms of biological role, negatively regulates transcription of bacterial ribonucleotide reductase nrd genes and operons by binding to NrdR-boxes. This is Transcriptional repressor NrdR from Shewanella sediminis (strain HAW-EB3).